A 401-amino-acid chain; its full sequence is Chromate transport protein (401 aa).

Transmembrane regions (helical) follow at residues L26–G46, G67–G87, I93–A113, L124–I144, V172–W192, A214–F234, A237–V257, V272–A294, A299–F321, I330–I350, S356–F376, and L379–L399.

The protein belongs to the chromate ion transporter (CHR) (TC 2.A.51) family.

The protein resides in the cell inner membrane. This protein reduces chromate accumulation and is essential for chromate resistance. This Cupriavidus metallidurans (strain ATCC 43123 / DSM 2839 / NBRC 102507 / CH34) (Ralstonia metallidurans) protein is Chromate transport protein.